We begin with the raw amino-acid sequence, 832 residues long: Protein P (832 aa).

Positions 1 to 177 (MPLSYQHFRR…FCGSPYSWEQ (177 aa)) are terminal protein domain (TP). The spacer stretch occupies residues 178-335 (ELQHGAESFH…YCLSHIVNLL (158 aa)). Residues 186 to 229 (FHQQSSGILSRPPVGSSLQSKHSKSRLGLQSQQGHLARRQQGRS) form a disordered region. The polymerase/reverse transcriptase domain (RT) stretch occupies residues 336-679 (EDWGPCAEHG…YLNLYPVARQ (344 aa)). Residues 346–589 (EHHIRTPRTP…YSLNFMGYVI (244 aa)) form the Reverse transcriptase domain. Residues Asp-418, Asp-540, and Asp-541 each contribute to the Mg(2+) site.

This sequence belongs to the hepadnaviridae P protein family.

It catalyses the reaction DNA(n) + a 2'-deoxyribonucleoside 5'-triphosphate = DNA(n+1) + diphosphate. The catalysed reaction is Endonucleolytic cleavage to 5'-phosphomonoester.. With respect to regulation, activated by host HSP70 and HSP40 in vitro to be able to bind the epsilon loop of the pgRNA. Because deletion of the RNase H region renders the protein partly chaperone-independent, the chaperones may be needed indirectly to relieve occlusion of the RNA-binding site by this domain. Inhibited by several reverse-transcriptase inhibitors: Lamivudine, Adefovir and Entecavir. Multifunctional enzyme that converts the viral RNA genome into dsDNA in viral cytoplasmic capsids. This enzyme displays a DNA polymerase activity that can copy either DNA or RNA templates, and a ribonuclease H (RNase H) activity that cleaves the RNA strand of RNA-DNA heteroduplexes in a partially processive 3'- to 5'-endonucleasic mode. Neo-synthesized pregenomic RNA (pgRNA) are encapsidated together with the P protein, and reverse-transcribed inside the nucleocapsid. Initiation of reverse-transcription occurs first by binding the epsilon loop on the pgRNA genome, and is initiated by protein priming, thereby the 5'-end of (-)DNA is covalently linked to P protein. Partial (+)DNA is synthesized from the (-)DNA template and generates the relaxed circular DNA (RC-DNA) genome. After budding and infection, the RC-DNA migrates in the nucleus, and is converted into a plasmid-like covalently closed circular DNA (cccDNA). The activity of P protein does not seem to be necessary for cccDNA generation, and is presumably released from (+)DNA by host nuclear DNA repair machinery. The chain is Protein P from Hepatitis B virus genotype D (isolate Germany/1-91/1991) (HBV-D).